A 354-amino-acid chain; its full sequence is Serum paraoxonase/arylesterase 2 (354 aa).

A disulfide bond links C42 and C352. 2 residues coordinate Ca(2+): E53 and D54. Catalysis depends on H114, which acts as the Proton acceptor. 4 residues coordinate Ca(2+): I116, N167, D168, and N223. The N-linked (GlcNAc...) asparagine glycan is linked to N254. 2 residues coordinate Ca(2+): D268 and N269. N-linked (GlcNAc...) asparagine glycans are attached at residues N269 and N323.

This sequence belongs to the paraoxonase family. Homotrimer. Requires Ca(2+) as cofactor. Post-translationally, the signal sequence is not cleaved. Widely expressed with highest expression in liver, lung, placenta, testis and heart.

The protein localises to the membrane. The enzyme catalyses a phenyl acetate + H2O = a phenol + acetate + H(+). It catalyses the reaction an N-acyl-L-homoserine lactone + H2O = an N-acyl-L-homoserine + H(+). Functionally, capable of hydrolyzing lactones and a number of aromatic carboxylic acid esters. Has antioxidant activity. Is not associated with high density lipoprotein. Prevents LDL lipid peroxidation, reverses the oxidation of mildly oxidized LDL, and inhibits the ability of MM-LDL to induce monocyte chemotaxis. The polypeptide is Serum paraoxonase/arylesterase 2 (PON2) (Homo sapiens (Human)).